Consider the following 113-residue polypeptide: Phosphorelay protein LuxU (113 aa).

Positions 18-113 constitute an HPt domain; the sequence is GEENVPILVN…THQCYSDLVH (96 aa). His57 carries the post-translational modification Phosphohistidine.

Monomer.

In terms of biological role, phosphorelay protein which receives sensory signals from a sensory kinase and transmit them to LuxO. At low cell density, a phosphoryl group is transferred from the sensory kinase, probably on His-57 and this phosphoryl group is further transferred to LuxO. In Vibrio cholerae serotype O1 (strain ATCC 39315 / El Tor Inaba N16961), this protein is Phosphorelay protein LuxU (luxU).